A 156-amino-acid polypeptide reads, in one-letter code: Small ribosomal subunit protein uS7 (156 aa).

It belongs to the universal ribosomal protein uS7 family. In terms of assembly, part of the 30S ribosomal subunit. Contacts proteins S9 and S11.

Functionally, one of the primary rRNA binding proteins, it binds directly to 16S rRNA where it nucleates assembly of the head domain of the 30S subunit. Is located at the subunit interface close to the decoding center, probably blocks exit of the E-site tRNA. In Heliobacterium modesticaldum (strain ATCC 51547 / Ice1), this protein is Small ribosomal subunit protein uS7.